Here is a 262-residue protein sequence, read N- to C-terminus: Methionine-rich nacre protein (262 aa).

Positions 1-22 are cleaved as a signal peptide; the sequence is MSIMRRILCLAVVIFIINDVSS. A compositionally biased stretch (low complexity) spans 26–35; that stretch reads GNNKNWKKNG. The segment at 26–84 is disordered; the sequence is GNNKNWKKNGMSLSSPGNKKPTGNNAVPQKSKMNNMNQNSLSQPKRSSPPGNSMYNMAN. Over residues 36–84 the composition is skewed to polar residues; that stretch reads MSLSSPGNKKPTGNNAVPQKSKMNNMNQNSLSQPKRSSPPGNSMYNMAN.

As to expression, expressed in mantle and, after secretion, incorporated into acid-insoluble nacre matrix of the shell (at protein level). Expressed primarily in the mantle with highest level in the mantle pallium and lower level in the mantle edge.

It is found in the secreted. The sequence is that of Methionine-rich nacre protein from Pinctada maxima (Silver-lipped pearl oyster).